The sequence spans 669 residues: DNA ligase (669 aa).

NAD(+) contacts are provided by residues 32–36 (DAEYD), 81–82 (SL), and Glu-111. Lys-113 acts as the N6-AMP-lysine intermediate in catalysis. Arg-134, Glu-171, Lys-290, and Lys-314 together coordinate NAD(+). Zn(2+) is bound by residues Cys-408, Cys-411, Cys-426, and Cys-432. One can recognise a BRCT domain in the interval 591–669 (EEALSLKGQT…EAELLAILGS (79 aa)).

It belongs to the NAD-dependent DNA ligase family. LigA subfamily. Mg(2+) serves as cofactor. It depends on Mn(2+) as a cofactor.

It catalyses the reaction NAD(+) + (deoxyribonucleotide)n-3'-hydroxyl + 5'-phospho-(deoxyribonucleotide)m = (deoxyribonucleotide)n+m + AMP + beta-nicotinamide D-nucleotide.. Its function is as follows. DNA ligase that catalyzes the formation of phosphodiester linkages between 5'-phosphoryl and 3'-hydroxyl groups in double-stranded DNA using NAD as a coenzyme and as the energy source for the reaction. It is essential for DNA replication and repair of damaged DNA. This chain is DNA ligase, found in Shewanella loihica (strain ATCC BAA-1088 / PV-4).